A 138-amino-acid polypeptide reads, in one-letter code: Cysteine desulfuration protein SufE (138 aa).

C51 functions as the Cysteine persulfide intermediate in the catalytic mechanism.

The protein belongs to the SufE family. As to quaternary structure, homodimer. Interacts with SufS.

Its subcellular location is the cytoplasm. It functions in the pathway cofactor biosynthesis; iron-sulfur cluster biosynthesis. Functionally, participates in cysteine desulfuration mediated by SufS. Cysteine desulfuration mobilizes sulfur from L-cysteine to yield L-alanine and constitutes an essential step in sulfur metabolism for biosynthesis of a variety of sulfur-containing biomolecules. Functions as a sulfur acceptor for SufS, by mediating the direct transfer of the sulfur atom from the S-sulfanylcysteine of SufS, an intermediate product of cysteine desulfuration process. The polypeptide is Cysteine desulfuration protein SufE (Escherichia coli (strain K12 / MC4100 / BW2952)).